The following is a 584-amino-acid chain: 65 kDa protein (584 aa).

Residues 459–548 (YDLYIAESAI…TKKVENWLPP (90 aa)) enclose the Toprim domain.

The chain is 65 kDa protein from Zymomonas mobilis subsp. mobilis (strain ATCC 10988 / DSM 424 / LMG 404 / NCIMB 8938 / NRRL B-806 / ZM1).